The following is a 73-amino-acid chain: UPF0235 protein LBL_1291 (73 aa).

It belongs to the UPF0235 family.

The protein is UPF0235 protein LBL_1291 of Leptospira borgpetersenii serovar Hardjo-bovis (strain L550).